The sequence spans 340 residues: Nuclear transcription factor Y subunit A-3 (340 aa).

The segment at 43–116 is disordered; the sequence is SLSLKVDSRP…KGFASNPKQG (74 aa). Positions 60-77 are enriched in low complexity; the sequence is QISFQDQDSSSTQSTGQS. Positions 78–103 are enriched in polar residues; sequence YTEVASSGDDNPSRQISFSAKSGSEI. The short motif at 182–205 is the Subunit association domain (SAD) element; that stretch reads FVNAKQYHAIMRRRQQRAKLEAQN. The NFYA/HAP2-type DNA-binding region spans 212 to 237; that stretch reads KPYLHESRHVHALKRPRGSGGRFLNT.

The protein belongs to the NFYA/HAP2 subunit family. In terms of assembly, heterotrimeric transcription factor composed of three components, NF-YA, NF-YB and NF-YC. NF-YB and NF-YC must interact and dimerize for NF-YA association and DNA binding. In terms of tissue distribution, ubiquitous.

It localises to the nucleus. In terms of biological role, stimulates the transcription of various genes by recognizing and binding to a CCAAT motif in promoters. The chain is Nuclear transcription factor Y subunit A-3 (NFYA3) from Arabidopsis thaliana (Mouse-ear cress).